The primary structure comprises 354 residues: Uroporphyrinogen decarboxylase (354 aa).

Residues 27-31 (RQAGR), D77, Y154, T209, and H327 each bind substrate.

The protein belongs to the uroporphyrinogen decarboxylase family. In terms of assembly, homodimer.

The protein resides in the cytoplasm. The enzyme catalyses uroporphyrinogen III + 4 H(+) = coproporphyrinogen III + 4 CO2. It functions in the pathway porphyrin-containing compound metabolism; protoporphyrin-IX biosynthesis; coproporphyrinogen-III from 5-aminolevulinate: step 4/4. In terms of biological role, catalyzes the decarboxylation of four acetate groups of uroporphyrinogen-III to yield coproporphyrinogen-III. In Escherichia coli (strain UTI89 / UPEC), this protein is Uroporphyrinogen decarboxylase.